A 362-amino-acid polypeptide reads, in one-letter code: 3-dehydroquinate synthase (362 aa).

NAD(+)-binding positions include D72 to K77, G106 to D110, T130 to T131, K143, and K152. Residues E185, H248, and H265 each coordinate Zn(2+).

Belongs to the sugar phosphate cyclases superfamily. Dehydroquinate synthase family. Co(2+) is required as a cofactor. Requires Zn(2+) as cofactor. The cofactor is NAD(+).

Its subcellular location is the cytoplasm. It catalyses the reaction 7-phospho-2-dehydro-3-deoxy-D-arabino-heptonate = 3-dehydroquinate + phosphate. The protein operates within metabolic intermediate biosynthesis; chorismate biosynthesis; chorismate from D-erythrose 4-phosphate and phosphoenolpyruvate: step 2/7. In terms of biological role, catalyzes the conversion of 3-deoxy-D-arabino-heptulosonate 7-phosphate (DAHP) to dehydroquinate (DHQ). This Laribacter hongkongensis (strain HLHK9) protein is 3-dehydroquinate synthase.